Reading from the N-terminus, the 222-residue chain is Protein DEHYDRATION-INDUCED 19 homolog 6 (222 aa).

S116 is subject to Phosphoserine.

Belongs to the Di19 family. Post-translationally, phosphorylated in vitro by CPK3 or CPK11. In terms of tissue distribution, expressed in seedlings, roots, leaves, stems, flowers and siliques.

Its subcellular location is the nucleus. The protein is Protein DEHYDRATION-INDUCED 19 homolog 6 (DI19-6) of Arabidopsis thaliana (Mouse-ear cress).